We begin with the raw amino-acid sequence, 202 residues long: ER membrane protein complex subunit 7 homolog (202 aa).

The signal sequence occupies residues Met-1–Thr-23. The chain crosses the membrane as a helical span at residues Ile-148–Pro-168. The tract at residues Met-179–Arg-202 is disordered. A compositionally biased stretch (polar residues) spans Ala-182–Arg-202.

It belongs to the EMC7 family.

Its subcellular location is the membrane. The chain is ER membrane protein complex subunit 7 homolog from Arabidopsis thaliana (Mouse-ear cress).